We begin with the raw amino-acid sequence, 150 residues long: 6,7-dimethyl-8-ribityllumazine synthase (150 aa).

Residues phenylalanine 11, 43-45 (TYE), and 67-69 (AVI) contribute to the 5-amino-6-(D-ribitylamino)uracil site. (2S)-2-hydroxy-3-oxobutyl phosphate is bound at residue 72–73 (AT). Histidine 75 serves as the catalytic Proton donor. A 5-amino-6-(D-ribitylamino)uracil-binding site is contributed by leucine 100. Arginine 115 contacts (2S)-2-hydroxy-3-oxobutyl phosphate.

It belongs to the DMRL synthase family.

The catalysed reaction is (2S)-2-hydroxy-3-oxobutyl phosphate + 5-amino-6-(D-ribitylamino)uracil = 6,7-dimethyl-8-(1-D-ribityl)lumazine + phosphate + 2 H2O + H(+). The protein operates within cofactor biosynthesis; riboflavin biosynthesis; riboflavin from 2-hydroxy-3-oxobutyl phosphate and 5-amino-6-(D-ribitylamino)uracil: step 1/2. Catalyzes the formation of 6,7-dimethyl-8-ribityllumazine by condensation of 5-amino-6-(D-ribitylamino)uracil with 3,4-dihydroxy-2-butanone 4-phosphate. This is the penultimate step in the biosynthesis of riboflavin. This is 6,7-dimethyl-8-ribityllumazine synthase from Staphylothermus marinus (strain ATCC 43588 / DSM 3639 / JCM 9404 / F1).